The sequence spans 423 residues: SH2 domain-containing adapter protein F (423 aa).

3 disordered regions span residues 1 to 87 (MQQE…STTR), 110 to 208 (DPFD…WEWK), and 225 to 312 (DLPW…GEWT). Positions 192–203 (EDDERPPEEYDQ) are enriched in acidic residues. Tyrosine 201 is subject to Phosphotyrosine. Residues 323–418 (WYHGAISRTD…AEHMSLLYPV (96 aa)) form the SH2 domain.

In terms of assembly, interacts with phosphorylated 'Tyr-720' of PDGFRA via its SH2 domain. May become phosphorylated upon binding to PDGFRA. In terms of tissue distribution, expressed in skeletal muscle, brain, liver, prostate, testis, ovary, small intestine and colon.

In terms of biological role, adapter protein which may play a role in the regulation of apoptosis in response to PDGF. This Homo sapiens (Human) protein is SH2 domain-containing adapter protein F.